Here is a 625-residue protein sequence, read N- to C-terminus: Grainyhead-like protein 2 homolog (625 aa).

The tract at residues 1-93 (MSQESDNNKR…KASDSQEDQD (93 aa)) is transcription activation. Disordered regions lie at residues 198 to 222 (ASHSSYLKDDQRSTPDSTYSESFKD) and 428 to 452 (EERKQNRKKGKGQASQAQCNNSSDG). In terms of domain architecture, Grh/CP2 DB spans 244–482 (GSGTFQYTLE…DLHSQPVLFI (239 aa)). A compositionally biased stretch (polar residues) spans 440–451 (QASQAQCNNSSD).

This sequence belongs to the grh/CP2 family. Grainyhead subfamily. Homodimer, also forms heterodimers with GRHL1 or GRHL3.

Its subcellular location is the nucleus. It is found in the membrane. In terms of biological role, transcription factor playing an important role in primary neurulation and in epithelial development. Binds directly to the consensus DNA sequence 5'-AACCGGTT-3' acting as an activator and repressor on distinct target genes. During embryogenesis, plays unique and cooperative roles with GRHL3 in establishing distinct zones of primary neurulation. Essential for closure 3 (rostral end of the forebrain), functions cooperatively with GRHL3 in closure 2 (forebrain/midbrain boundary) and posterior neuropore closure. Regulates epithelial morphogenesis acting as a target gene-associated transcriptional activator of apical junctional complex components. Up-regulates of CLDN3 and CLDN4, as well as of RAB25, which increases the CLDN4 protein and its localization at tight junctions. Comprises an essential component of the transcriptional machinery that establishes appropriate expression levels of CLDN4 and CDH1 in different types of epithelia. Exhibits functional redundancy with GRHL3 in epidermal morphogenetic events such as eyelid fusion and epidermal wound repair. In lung, forms a regulatory loop with NKX2-1 that coordinates lung epithelial cell morphogenesis and differentiation. In keratinocytes, plays a role in telomerase activation during cellular proliferation, regulates TERT expression by binding to TERT promoter region and inhibiting DNA methylation at the 5'-CpG island, possibly by interfering with DNMT1 enzyme activity. In addition, impairs keratinocyte differentiation and epidermal function by inhibiting the expression of genes clustered at the epidermal differentiation complex (EDC) as well as GRHL1 and GRHL3 through epigenetic mechanisms. This Mus musculus (Mouse) protein is Grainyhead-like protein 2 homolog (Grhl2).